Reading from the N-terminus, the 375-residue chain is Anhydro-N-acetylmuramic acid kinase (375 aa).

An ATP-binding site is contributed by 18-25 (GTSMDGID).

It belongs to the anhydro-N-acetylmuramic acid kinase family.

The enzyme catalyses 1,6-anhydro-N-acetyl-beta-muramate + ATP + H2O = N-acetyl-D-muramate 6-phosphate + ADP + H(+). It participates in amino-sugar metabolism; 1,6-anhydro-N-acetylmuramate degradation. Its pathway is cell wall biogenesis; peptidoglycan recycling. Its function is as follows. Catalyzes the specific phosphorylation of 1,6-anhydro-N-acetylmuramic acid (anhMurNAc) with the simultaneous cleavage of the 1,6-anhydro ring, generating MurNAc-6-P. Is required for the utilization of anhMurNAc either imported from the medium or derived from its own cell wall murein, and thus plays a role in cell wall recycling. In Rhodospirillum rubrum (strain ATCC 11170 / ATH 1.1.1 / DSM 467 / LMG 4362 / NCIMB 8255 / S1), this protein is Anhydro-N-acetylmuramic acid kinase.